Reading from the N-terminus, the 297-residue chain is Mycothiol acetyltransferase (297 aa).

2 N-acetyltransferase domains span residues 8 to 153 and 156 to 297; these read DALD…PPLP and VALR…QYAL. 1D-myo-inositol 2-(L-cysteinylamino)-2-deoxy-alpha-D-glucopyranoside is bound at residue Glu36. 80–82 contributes to the acetyl-CoA binding site; it reads LAV. 1D-myo-inositol 2-(L-cysteinylamino)-2-deoxy-alpha-D-glucopyranoside is bound by residues Glu183, Lys223, and Glu231. Residues 235-237 and 242-248 each bind acetyl-CoA; these read VGV and QGGGLGK. 1D-myo-inositol 2-(L-cysteinylamino)-2-deoxy-alpha-D-glucopyranoside is bound at residue Tyr269. Acetyl-CoA is bound at residue 274-279; sequence NSPAVR.

It belongs to the acetyltransferase family. MshD subfamily. Monomer.

The catalysed reaction is 1D-myo-inositol 2-(L-cysteinylamino)-2-deoxy-alpha-D-glucopyranoside + acetyl-CoA = mycothiol + CoA + H(+). Functionally, catalyzes the transfer of acetyl from acetyl-CoA to desacetylmycothiol (Cys-GlcN-Ins) to form mycothiol. The protein is Mycothiol acetyltransferase of Actinosynnema mirum (strain ATCC 29888 / DSM 43827 / JCM 3225 / NBRC 14064 / NCIMB 13271 / NRRL B-12336 / IMRU 3971 / 101).